Consider the following 508-residue polypeptide: Light-independent protochlorophyllide reductase subunit B (508 aa).

Asp-36 contacts [4Fe-4S] cluster. The Proton donor role is filled by Asp-294. 429–430 (GM) provides a ligand contact to substrate.

The protein belongs to the ChlB/BchB/BchZ family. As to quaternary structure, protochlorophyllide reductase is composed of three subunits; ChlL, ChlN and ChlB. Forms a heterotetramer of two ChlB and two ChlN subunits. [4Fe-4S] cluster is required as a cofactor.

The enzyme catalyses chlorophyllide a + oxidized 2[4Fe-4S]-[ferredoxin] + 2 ADP + 2 phosphate = protochlorophyllide a + reduced 2[4Fe-4S]-[ferredoxin] + 2 ATP + 2 H2O. It participates in porphyrin-containing compound metabolism; chlorophyll biosynthesis (light-independent). Functionally, component of the dark-operative protochlorophyllide reductase (DPOR) that uses Mg-ATP and reduced ferredoxin to reduce ring D of protochlorophyllide (Pchlide) to form chlorophyllide a (Chlide). This reaction is light-independent. The NB-protein (ChlN-ChlB) is the catalytic component of the complex. The chain is Light-independent protochlorophyllide reductase subunit B from Picosynechococcus sp. (strain ATCC 27264 / PCC 7002 / PR-6) (Agmenellum quadruplicatum).